A 203-amino-acid polypeptide reads, in one-letter code: MPKAPKGKSAGREKKVIHPYSRKAAQITREAHKQEKKEKLKNEKALRLNLVGEKLQWFQNHLDPQKKRYSKKDACELIERYLNRFSSELEQIELHNSIRDRQGRRHCSRETVIKQTMERERQQFEGYGLEIPDILNASNLKTFREWDFDLKKLPNIKMRKICANDAIPKTCKRKTIITVDQDLGELELNDESSDSDEEMTAVA.

The disordered stretch occupies residues 1-39 (MPKAPKGKSAGREKKVIHPYSRKAAQITREAHKQEKKEK). Position 9 is an ADP-ribosylserine (Ser-9). A compositionally biased stretch (basic and acidic residues) spans 29–39 (REAHKQEKKEK).

The protein belongs to the TMA16 family. In terms of assembly, associates with pre-60S ribosomal particles.

It localises to the nucleus. Its function is as follows. Involved in the biogenesis of the 60S ribosomal subunit in the nucleus. This Homo sapiens (Human) protein is Translation machinery-associated protein 16 (TMA16).